We begin with the raw amino-acid sequence, 198 residues long: HTH-type transcriptional regulator BetI (198 aa).

One can recognise an HTH tetR-type domain in the interval 8–68; sequence PIRRQQLIDA…ATMRYLISHL (61 aa). The segment at residues 31–50 is a DNA-binding region (H-T-H motif); sequence TIAQIARRAGVSNGIISHYF.

The protein operates within amine and polyamine biosynthesis; betaine biosynthesis via choline pathway [regulation]. Its function is as follows. Repressor involved in the biosynthesis of the osmoprotectant glycine betaine. It represses transcription of the choline transporter BetT and the genes of BetAB involved in the synthesis of glycine betaine. In Serratia proteamaculans (strain 568), this protein is HTH-type transcriptional regulator BetI.